The chain runs to 460 residues: Elongation factor 1-alpha (460 aa).

Gly2 bears the N,N,N-trimethylglycine mark. Lys3 is subject to N6,N6-dimethyllysine; alternate. N6-methyllysine; alternate is present on Lys3. Residues 6-241 form the tr-type G domain; the sequence is KTHINVVVIG…DSIEPPKRPT (236 aa). Residues 15–22 form a G1 region; that stretch reads GHVDSGKS. 15–22 is a binding site for GTP; the sequence is GHVDSGKS. A G2 region spans residues 71–75; sequence GITID. Lys80 is subject to N6,N6,N6-trimethyllysine. The tract at residues 92 to 95 is G3; sequence DAPG. GTP-binding positions include 92 to 96 and 154 to 157; these read DAPGH and NKMD. The tract at residues 154-157 is G4; the sequence is NKMD. Residues 193-195 are G5; that stretch reads SGF. Lys317 is subject to N6,N6-dimethyllysine; alternate. At Lys317 the chain carries N6-methyllysine; alternate. Lys391 bears the N6-methyllysine mark.

The protein belongs to the TRAFAC class translation factor GTPase superfamily. Classic translation factor GTPase family. EF-Tu/EF-1A subfamily.

The protein localises to the cytoplasm. Functionally, this protein promotes the GTP-dependent binding of aminoacyl-tRNA to the A-site of ribosomes during protein biosynthesis. This chain is Elongation factor 1-alpha (tef1), found in Hypocrea jecorina (Trichoderma reesei).